The chain runs to 336 residues: Geranylgeranyl pyrophosphate synthase 6, mitochondrial (336 aa).

The N-terminal 22 residues, 1-22, are a transit peptide targeting the mitochondrion; that stretch reads MRPRYSLILSAMRLIRPSNRRL. 3 residues coordinate isopentenyl diphosphate: Lys-80, Arg-83, and His-112. Mg(2+) contacts are provided by Asp-119 and Asp-125. Position 130 (Arg-130) interacts with dimethylallyl diphosphate. An isopentenyl diphosphate-binding site is contributed by Arg-131. Dimethylallyl diphosphate-binding residues include Lys-221, Thr-222, Gln-259, Lys-276, and Lys-286.

This sequence belongs to the FPP/GGPP synthase family. In terms of assembly, monomer. The cofactor is Mg(2+).

The protein localises to the mitochondrion. The catalysed reaction is isopentenyl diphosphate + dimethylallyl diphosphate = (2E)-geranyl diphosphate + diphosphate. It catalyses the reaction isopentenyl diphosphate + (2E)-geranyl diphosphate = (2E,6E)-farnesyl diphosphate + diphosphate. The enzyme catalyses isopentenyl diphosphate + (2E,6E)-farnesyl diphosphate = (2E,6E,10E)-geranylgeranyl diphosphate + diphosphate. It participates in isoprenoid biosynthesis; farnesyl diphosphate biosynthesis; farnesyl diphosphate from geranyl diphosphate and isopentenyl diphosphate: step 1/1. It functions in the pathway isoprenoid biosynthesis; geranyl diphosphate biosynthesis; geranyl diphosphate from dimethylallyl diphosphate and isopentenyl diphosphate: step 1/1. The protein operates within isoprenoid biosynthesis; geranylgeranyl diphosphate biosynthesis; geranylgeranyl diphosphate from farnesyl diphosphate and isopentenyl diphosphate: step 1/1. Its function is as follows. Catalyzes the trans-addition of the three molecules of IPP onto DMAPP to form geranylgeranyl pyrophosphate. The sequence is that of Geranylgeranyl pyrophosphate synthase 6, mitochondrial from Arabidopsis thaliana (Mouse-ear cress).